The primary structure comprises 206 residues: Probable glutathione S-transferase 6 (206 aa).

Positions 2-79 (VHYKLVYFPL…YLAREFGIAG (78 aa)) constitute a GST N-terminal domain. Glutathione is bound by residues Tyr-8, Trp-39, Lys-43, 49-51 (GQL), and 63-64 (QS). Positions 81–206 (NDTEAAEVDA…YIANRPDYPF (126 aa)) constitute a GST C-terminal domain.

This sequence belongs to the GST superfamily. Sigma family.

The enzyme catalyses RX + glutathione = an S-substituted glutathione + a halide anion + H(+). Functionally, conjugation of reduced glutathione to a wide number of exogenous and endogenous hydrophobic electrophiles. The sequence is that of Probable glutathione S-transferase 6 (gst-6) from Caenorhabditis elegans.